The primary structure comprises 119 residues: Large ribosomal subunit protein bL19 (119 aa).

This sequence belongs to the bacterial ribosomal protein bL19 family.

Its function is as follows. This protein is located at the 30S-50S ribosomal subunit interface and may play a role in the structure and function of the aminoacyl-tRNA binding site. This is Large ribosomal subunit protein bL19 (rplS) from Mycoplasma pneumoniae (strain ATCC 29342 / M129 / Subtype 1) (Mycoplasmoides pneumoniae).